The sequence spans 223 residues: TMF-regulated nuclear protein 1 (223 aa).

2 disordered regions span residues 1–84 and 196–223; these read MPGC…GPAG and GRLR…SPQR. The segment covering 21–54 has biased composition (pro residues); the sequence is GSPPPPPREPLPSLQPPSPSPTSTPTPTKSPPLP. Gly residues predominate over residues 73-84; that stretch reads ASGGSGGAGPAG.

In terms of assembly, interacts with TMF1; may regulate TRNP1 proteasomal degradation. In terms of processing, ubiquitinated, leading to its degradation by the proteasome. Expressed in brain and kidney (at protein level). Also detected in spleen and intestine.

It localises to the nucleus. Its function is as follows. DNA-binding factor that regulates the expression of a subset of genes and plays a key role in tangential, radial, and lateral expansion of the brain neocortex. Regulates neural stem cells proliferation and the production of intermediate neural progenitors and basal radial glial cells affecting the process of cerebral cortex gyrification. May control the proliferation rate of cells by regulating their progression through key cell-cycle transition points. This chain is TMF-regulated nuclear protein 1 (Trnp1), found in Mus musculus (Mouse).